Reading from the N-terminus, the 351-residue chain is Peptide chain release factor 1 (351 aa).

Gln233 is modified (N5-methylglutamine).

It belongs to the prokaryotic/mitochondrial release factor family. Methylated by PrmC. Methylation increases the termination efficiency of RF1.

The protein resides in the cytoplasm. In terms of biological role, peptide chain release factor 1 directs the termination of translation in response to the peptide chain termination codons UAG and UAA. This is Peptide chain release factor 1 (prfA) from Treponema pallidum (strain Nichols).